The sequence spans 70 residues: DNA-directed RNA polymerase subunit omega (70 aa).

It belongs to the RNA polymerase subunit omega family. The RNAP catalytic core consists of 2 alpha, 1 beta, 1 beta' and 1 omega subunit. When a sigma factor is associated with the core the holoenzyme is formed, which can initiate transcription.

It catalyses the reaction RNA(n) + a ribonucleoside 5'-triphosphate = RNA(n+1) + diphosphate. Its function is as follows. Promotes RNA polymerase assembly. Latches the N- and C-terminal regions of the beta' subunit thereby facilitating its interaction with the beta and alpha subunits. The sequence is that of DNA-directed RNA polymerase subunit omega from Clostridium perfringens (strain ATCC 13124 / DSM 756 / JCM 1290 / NCIMB 6125 / NCTC 8237 / Type A).